Reading from the N-terminus, the 95-residue chain is Protein RnfH (95 aa).

Belongs to the UPF0125 (RnfH) family.

This chain is Protein RnfH, found in Methylococcus capsulatus (strain ATCC 33009 / NCIMB 11132 / Bath).